The chain runs to 124 residues: Large ribosomal subunit protein bL20c (124 aa).

The protein belongs to the bacterial ribosomal protein bL20 family.

The protein localises to the plastid. It localises to the chloroplast. In terms of biological role, binds directly to 23S ribosomal RNA and is necessary for the in vitro assembly process of the 50S ribosomal subunit. It is not involved in the protein synthesizing functions of that subunit. This is Large ribosomal subunit protein bL20c from Stigeoclonium helveticum (Green alga).